Consider the following 417-residue polypeptide: NADH-quinone oxidoreductase subunit D (417 aa).

Belongs to the complex I 49 kDa subunit family. In terms of assembly, NDH-1 is composed of 14 different subunits. Subunits NuoB, C, D, E, F, and G constitute the peripheral sector of the complex.

It localises to the cell inner membrane. It catalyses the reaction a quinone + NADH + 5 H(+)(in) = a quinol + NAD(+) + 4 H(+)(out). In terms of biological role, NDH-1 shuttles electrons from NADH, via FMN and iron-sulfur (Fe-S) centers, to quinones in the respiratory chain. The immediate electron acceptor for the enzyme in this species is believed to be ubiquinone. Couples the redox reaction to proton translocation (for every two electrons transferred, four hydrogen ions are translocated across the cytoplasmic membrane), and thus conserves the redox energy in a proton gradient. The protein is NADH-quinone oxidoreductase subunit D of Burkholderia thailandensis (strain ATCC 700388 / DSM 13276 / CCUG 48851 / CIP 106301 / E264).